The following is a 221-amino-acid chain: Large ribosomal subunit protein uL3 (221 aa).

It belongs to the universal ribosomal protein uL3 family. Part of the 50S ribosomal subunit. Forms a cluster with proteins L14 and L19.

Functionally, one of the primary rRNA binding proteins, it binds directly near the 3'-end of the 23S rRNA, where it nucleates assembly of the 50S subunit. This Nocardia farcinica (strain IFM 10152) protein is Large ribosomal subunit protein uL3.